A 174-amino-acid chain; its full sequence is Shikimate kinase 2 (174 aa).

G12 to T17 contacts ATP. The Mg(2+) site is built by T16 and D32. Substrate contacts are provided by D34, R58, and G79. The segment at A112 to K126 is LID domain. An ATP-binding site is contributed by R120. R139 is a binding site for substrate. Q155 provides a ligand contact to ATP.

This sequence belongs to the shikimate kinase family. AroL subfamily. As to quaternary structure, monomer. Requires Mg(2+) as cofactor.

Its subcellular location is the cytoplasm. It carries out the reaction shikimate + ATP = 3-phosphoshikimate + ADP + H(+). It functions in the pathway metabolic intermediate biosynthesis; chorismate biosynthesis; chorismate from D-erythrose 4-phosphate and phosphoenolpyruvate: step 5/7. In terms of biological role, catalyzes the specific phosphorylation of the 3-hydroxyl group of shikimic acid using ATP as a cosubstrate. The protein is Shikimate kinase 2 of Yersinia enterocolitica serotype O:8 / biotype 1B (strain NCTC 13174 / 8081).